The primary structure comprises 392 residues: GDP-mannose transporter (392 aa).

The tract at residues 1-40 (MANKRNEDIELGPAEGRGSTDKDPFLARRSSSQPNRPQQA) is disordered. Residues 1–55 (MANKRNEDIELGPAEGRGSTDKDPFLARRSSSQPNRPQQAGPFGGYFDKIDHSPG) lie on the Cytoplasmic side of the membrane. A compositionally biased stretch (polar residues) spans 29–38 (RSSSQPNRPQ). Residues 56–76 (ASIIAYCLSSISMTVVNKYVV) traverse the membrane as a helical segment. At 77–80 (SGSE) the chain is on the lumenal side. Residues 81–101 (WNLNFFYLAVQSLVCTAAILI) traverse the membrane as a helical segment. The Cytoplasmic portion of the chain corresponds to 102-121 (CKQLGMFQNLAAFDSTKAKK). Residues 122-144 (WFPISLLLVGMIYTSTKALQFLS) traverse the membrane as a helical segment. The Lumenal segment spans residues 145–149 (VPVYT). Residues 150–168 (IFKNLTIIVVAYGEVLWFG) traverse the membrane as a helical segment. Residues 169-174 (GSVTPM) lie on the Cytoplasmic side of the membrane. Residues 175–198 (ALLSFGLMVLSSVIAAWADIQAAV) traverse the membrane as a helical segment. The Lumenal portion of the chain corresponds to 199-213 (EGVGHTAEATDAIST). Residues 214–234 (LNAGYAWMGMNVFCTAAYLLG) form a helical membrane-spanning segment. At 235–248 (MRKVIKKMNFKDYD) the chain is on the cytoplasmic side. Residues 249-269 (TMFYNNLLTIPVLIVFSLLFE) form a helical membrane-spanning segment. Over 270-287 (DWSNDNLIKNFPVETRNS) the chain is Lumenal. Residues 288–308 (LFIGMIYSGLAAIFISYCSAW) traverse the membrane as a helical segment. Residues 309-316 (CIRVTSST) are Cytoplasmic-facing. A helical transmembrane segment spans residues 317-337 (TYSMVGALNKLPLAISGLIFF). At 338-342 (DAPVT) the chain is on the lumenal side. Residues 343-361 (FGSVTAIFVGFVSGLVYTW) form a helical membrane-spanning segment. At 362–392 (SKTRQKVSQILPTTQPTMSASAASNRDAANA) the chain is on the cytoplasmic side.

This sequence belongs to the TPT transporter family. SLC35D subfamily. Homooligomer.

It localises to the golgi apparatus membrane. The protein localises to the cytoplasmic vesicle membrane. The protein resides in the endoplasmic reticulum membrane. Its function is as follows. Involved in the import of GDP-mannose from the cytoplasm into the Golgi lumen. This Neurospora crassa (strain ATCC 24698 / 74-OR23-1A / CBS 708.71 / DSM 1257 / FGSC 987) protein is GDP-mannose transporter (vrg-4).